The following is a 235-amino-acid chain: Uridylate kinase (235 aa).

Residue 9 to 12 (KLSG) participates in ATP binding. A UMP-binding site is contributed by Gly-51. Positions 52 and 56 each coordinate ATP. UMP is bound by residues Asp-71 and 132–139 (TGNPYFTT). The ATP site is built by Thr-159, Tyr-165, and Asp-168.

The protein belongs to the UMP kinase family. In terms of assembly, homohexamer.

It localises to the cytoplasm. It catalyses the reaction UMP + ATP = UDP + ADP. The protein operates within pyrimidine metabolism; CTP biosynthesis via de novo pathway; UDP from UMP (UMPK route): step 1/1. With respect to regulation, inhibited by UTP. Its function is as follows. Catalyzes the reversible phosphorylation of UMP to UDP. This chain is Uridylate kinase, found in Christiangramia forsetii (strain DSM 17595 / CGMCC 1.15422 / KT0803) (Gramella forsetii).